The chain runs to 201 residues: Dephospho-CoA kinase (201 aa).

A DPCK domain is found at Val-4–Lys-201. Ala-12 to Thr-17 serves as a coordination point for ATP.

The protein belongs to the CoaE family.

Its subcellular location is the cytoplasm. The catalysed reaction is 3'-dephospho-CoA + ATP = ADP + CoA + H(+). It participates in cofactor biosynthesis; coenzyme A biosynthesis; CoA from (R)-pantothenate: step 5/5. In terms of biological role, catalyzes the phosphorylation of the 3'-hydroxyl group of dephosphocoenzyme A to form coenzyme A. This is Dephospho-CoA kinase from Bacillus licheniformis (strain ATCC 14580 / DSM 13 / JCM 2505 / CCUG 7422 / NBRC 12200 / NCIMB 9375 / NCTC 10341 / NRRL NRS-1264 / Gibson 46).